The sequence spans 869 residues: Speckle targeted PIP5K1A-regulated poly(A) polymerase (869 aa).

The segment at 16-46 (FRCCLCHVTTANRPSLDAHLGGRKHRHLVEL) adopts a Matrin-type zinc-finger fold. One can recognise an RRM domain in the interval 56 to 128 (RSVFVSGFPR…HRLRVRPREQ (73 aa)). Residues 111–147 (QPQHTLGGHRLRVRPREQKEFQSPASKSPKGAAPDSH) form a disordered region. S205 provides a ligand contact to ATP. Residues D216 and D218 each contribute to the Mg(2+) site. The UTP site is built by D216 and D218. Residues 252–315 (QALACTPASP…PASPLQEDRG (64 aa)) are disordered. A compositionally biased stretch (pro residues) spans 259-269 (ASPPDSQPPSP). The span at 279–290 (TPSSSLAPQTPD) shows a compositional bias: polar residues. ATP is bound at residue N391. The UTP site is built by N391, R413, Y431, and H548. The PAP-associated domain occupies 490-548 (LSSLLAQFFSCVSCWDLRGSLLSLREGQALPVAGDLPSNRWEGLRLGPMNLQDPFDLSH). The tract at residues 597–869 (SSPSSLLSAT…VFLPQALRNL (273 aa)) is KA1; binds the bulging loops of U6 snRNA but is dispensable for terminal uridylyltransferase activity. Basic and acidic residues-rich tracts occupy residues 637–648 (GTKRLRSDRGGP) and 660–686 (LKLDGEEKSCEEGREEQQGYIRDHSED). Disordered stretches follow at residues 637 to 686 (GTKR…HSED) and 720 to 755 (LATGEEGQSGHAALAEQGPKGPEAAREGSQGETGRG). A phosphoserine mark is found at S684 and S748.

This sequence belongs to the DNA polymerase type-B-like family. Associates with the cleavage and polyadenylation specificity factor (CPSF) complex. Interacts with CPSF1 and CPSF3; the interaction is direct. Interacts with PIP5K1A. It depends on Mg(2+) as a cofactor. Mn(2+) serves as cofactor. In terms of processing, phosphorylated by CK1 in the proline-rich (Pro-rich) region.

The protein localises to the nucleus. The protein resides in the nucleolus. It localises to the nucleus speckle. It catalyses the reaction RNA(n) + UTP = RNA(n)-3'-uridine ribonucleotide + diphosphate. The catalysed reaction is RNA(n) + ATP = RNA(n)-3'-adenine ribonucleotide + diphosphate. With respect to regulation, adenylyltransferase activity is specifically phosphatidylinositol 4,5-bisphosphate (PtdIns(4,5)P2). Its function is as follows. Poly(A) polymerase that creates the 3'-poly(A) tail of specific pre-mRNAs. Localizes to nuclear speckles together with PIP5K1A and mediates polyadenylation of a select set of mRNAs, such as HMOX1. In addition to polyadenylation, it is also required for the 3'-end cleavage of pre-mRNAs: binds to the 3'UTR of targeted pre-mRNAs and promotes the recruitment and assembly of the CPSF complex on the 3'UTR of pre-mRNAs. In addition to adenylyltransferase activity, also has uridylyltransferase activity. However, the ATP ratio is higher than UTP in cells, suggesting that it functions primarily as a poly(A) polymerase. Acts as a specific terminal uridylyltransferase for U6 snRNA in vitro: responsible for a controlled elongation reaction that results in the restoration of the four 3'-terminal UMP-residues found in newly transcribed U6 snRNA. Not involved in replication-dependent histone mRNA degradation. The polypeptide is Speckle targeted PIP5K1A-regulated poly(A) polymerase (TUT1) (Ailuropoda melanoleuca (Giant panda)).